Here is a 403-residue protein sequence, read N- to C-terminus: MTQTVNEREDPLNLGGGGWASSIPLRTWSSYHRRQRGAPVSKRRYRDGPKIEYEASRKQPKQQRSPGSWFQPSRGPYWALYSNWERCGGPWRPPLIAFQSPLCPAQMIRAYGLHPLCVCCCSCWSGPWNPGWERPPGRKKRWGRRGRGLRRHPRRSFPRNPPIDLSKMLRPVNLSGWRAPGMRAPRNTTQFIMNQVYEDMRQQEKLERQQAALRAQQAQEGGISPGDSTTNDAPHSGVEEDSQLPEDLYGFMQDPSLTFSPALMQHNQSPTPGLVEEEEKNVDDDECDVEVCDEKEESEEEEEEEVDRGSEDEDVDEEEVEAAGNGEEGEEDQEEEYMLEETGLEEGEQRAEEKFLPLGMPLSILVGDEEERENFMNYDYLSQEQIIPNVPEADLFMVPDISH.

Residues 1 to 11 (MTQTVNEREDP) show a composition bias toward basic and acidic residues. Disordered regions lie at residues 1–23 (MTQT…ASSI), 51–70 (IEYE…GSWF), 134–164 (RPPG…PPID), 202–241 (QQEK…VEED), and 261–350 (PALM…GEQR). The span at 137–157 (GRKKRWGRRGRGLRRHPRRSF) shows a compositional bias: basic residues. The span at 209–220 (QQAALRAQQAQE) shows a compositional bias: low complexity. A compositionally biased stretch (polar residues) spans 261-271 (PALMQHNQSPT). Residues 275-346 (VEEEEKNVDD…YMLEETGLEE (72 aa)) are compositionally biased toward acidic residues. The stretch at 292 to 353 (CDEKEESEEE…LEEGEQRAEE (62 aa)) forms a coiled coil.

Expressed in testis.

The protein resides in the nucleus. Functionally, regulator of histone epigenetic modifications and chromatin compaction into the sperm head, required for histone-to-protamine (HTP) transition. HTP is a key event in which somatic histones are first replaced by testis-specific histone variants, then transition proteins (TNPs) are incorporated into the spermatid nucleus, and finally protamines (PRMs) replace the TNPs to promote chromatin condensation. The sequence is that of Coiled-coil domain-containing glutamate-rich protein 1 (Ccer1) from Mus musculus (Mouse).